Here is a 213-residue protein sequence, read N- to C-terminus: Orotate phosphoribosyltransferase (213 aa).

Lys-26 provides a ligand contact to 5-phospho-alpha-D-ribose 1-diphosphate. Orotate is bound at residue 34–35 (FF). 5-phospho-alpha-D-ribose 1-diphosphate-binding positions include 72–73 (YK), Arg-99, Lys-100, Lys-103, His-105, and 124–132 (DDVITAGTA). Residues Thr-128 and Arg-156 each coordinate orotate.

This sequence belongs to the purine/pyrimidine phosphoribosyltransferase family. PyrE subfamily. As to quaternary structure, homodimer. Mg(2+) is required as a cofactor.

The enzyme catalyses orotidine 5'-phosphate + diphosphate = orotate + 5-phospho-alpha-D-ribose 1-diphosphate. Its pathway is pyrimidine metabolism; UMP biosynthesis via de novo pathway; UMP from orotate: step 1/2. Catalyzes the transfer of a ribosyl phosphate group from 5-phosphoribose 1-diphosphate to orotate, leading to the formation of orotidine monophosphate (OMP). This chain is Orotate phosphoribosyltransferase, found in Photobacterium profundum (strain SS9).